Reading from the N-terminus, the 310-residue chain is Elongation factor Ts (310 aa).

The segment at 80–83 is involved in Mg(2+) ion dislocation from EF-Tu; the sequence is TDFV.

It belongs to the EF-Ts family.

The protein localises to the cytoplasm. Associates with the EF-Tu.GDP complex and induces the exchange of GDP to GTP. It remains bound to the aminoacyl-tRNA.EF-Tu.GTP complex up to the GTP hydrolysis stage on the ribosome. The polypeptide is Elongation factor Ts (Beijerinckia indica subsp. indica (strain ATCC 9039 / DSM 1715 / NCIMB 8712)).